The sequence spans 222 residues: MVKLMKKLEDKKGIIEITFEEEREILELPSKPELPKYASQLINLANIFSQGTRPKVVGQMSELIKEFRKTGGRTFEDWKKWYLQKYPNAIDEATEKIWNMLNNFKETLEQLERDDVRKWVEDLVLIKTYEGLMLQDAILKKVAEELGGNYRPSTIEEESKGIDGVIIIDDKEIPVSIKSKTYVNQEKHLSEELKGHLIIYEKKKNKIIVDYSDLLDLVENTK.

It carries out the reaction Endonucleolytic cleavage of DNA to give specific double-stranded fragments with terminal 5'-phosphates.. A P subtype restriction enzyme that recognizes the double-stranded sequence 5'-CTAG-3'; the cleavage site is unknown. In Methanocaldococcus jannaschii (strain ATCC 43067 / DSM 2661 / JAL-1 / JCM 10045 / NBRC 100440) (Methanococcus jannaschii), this protein is Type II restriction enzyme MjaI (mjaIR).